The primary structure comprises 148 residues: uncharacterized protein (148 aa).

The protein belongs to the SufE family.

This is an uncharacterized protein from Rhizobium etli (strain ATCC 51251 / DSM 11541 / JCM 21823 / NBRC 15573 / CFN 42).